The following is a 97-amino-acid chain: Co-chaperonin GroES (97 aa).

This sequence belongs to the GroES chaperonin family. In terms of assembly, heptamer of 7 subunits arranged in a ring. Interacts with the chaperonin GroEL.

Its subcellular location is the cytoplasm. Together with the chaperonin GroEL, plays an essential role in assisting protein folding. The GroEL-GroES system forms a nano-cage that allows encapsulation of the non-native substrate proteins and provides a physical environment optimized to promote and accelerate protein folding. GroES binds to the apical surface of the GroEL ring, thereby capping the opening of the GroEL channel. The polypeptide is Co-chaperonin GroES (Salmonella agona (strain SL483)).